The following is a 375-amino-acid chain: tRNA-specific 2-thiouridylase MnmA (375 aa).

ATP-binding positions include 8–15 (GLSGGVDS) and methionine 34. An interaction with target base in tRNA region spans residues 104–106 (NPD). The Nucleophile role is filled by cysteine 109. A disulfide bond links cysteine 109 and cysteine 208. Position 134 (glycine 134) interacts with ATP. An interaction with tRNA region spans residues 158–160 (KDQ). Cysteine 208 functions as the Cysteine persulfide intermediate in the catalytic mechanism. An interaction with tRNA region spans residues 321 to 322 (RY).

This sequence belongs to the MnmA/TRMU family.

It is found in the cytoplasm. It carries out the reaction S-sulfanyl-L-cysteinyl-[protein] + uridine(34) in tRNA + AH2 + ATP = 2-thiouridine(34) in tRNA + L-cysteinyl-[protein] + A + AMP + diphosphate + H(+). In terms of biological role, catalyzes the 2-thiolation of uridine at the wobble position (U34) of tRNA, leading to the formation of s(2)U34. The polypeptide is tRNA-specific 2-thiouridylase MnmA (Mycoplasma mycoides subsp. mycoides SC (strain CCUG 32753 / NCTC 10114 / PG1)).